We begin with the raw amino-acid sequence, 444 residues long: Phosphoribosylamine--glycine ligase (444 aa).

An ATP-grasp domain is found at 109–324; it reads RNLFKKYEID…FLDVCFAIAE (216 aa). 140–202 lines the ATP pocket; sequence MTSLGKDVVV…EEKLVGVEFT (63 aa). Gln-282, Glu-294, and Asn-296 together coordinate Mg(2+). The Mn(2+) site is built by Gln-282, Glu-294, and Asn-296.

Belongs to the GARS family. The cofactor is Mg(2+). Mn(2+) is required as a cofactor.

It carries out the reaction 5-phospho-beta-D-ribosylamine + glycine + ATP = N(1)-(5-phospho-beta-D-ribosyl)glycinamide + ADP + phosphate + H(+). It functions in the pathway purine metabolism; IMP biosynthesis via de novo pathway; N(1)-(5-phospho-D-ribosyl)glycinamide from 5-phospho-alpha-D-ribose 1-diphosphate: step 2/2. The protein is Phosphoribosylamine--glycine ligase of Methanococcus maripaludis (strain C7 / ATCC BAA-1331).